Here is a 263-residue protein sequence, read N- to C-terminus: Putative hydro-lyase Psyc_1103 (263 aa).

The protein belongs to the D-glutamate cyclase family.

The sequence is that of Putative hydro-lyase Psyc_1103 from Psychrobacter arcticus (strain DSM 17307 / VKM B-2377 / 273-4).